The primary structure comprises 285 residues: Aquaporin-6 (285 aa).

3 helical membrane-spanning segments follow: residues 36–56, 76–96, and 105–125; these read IFWK…VFSC, YCFK…ALLL, and ISLV…CYYG. The short motif at 86–88 is the NPA 1 element; sequence NPV. N-linked (GlcNAc...) asparagine glycosylation is present at Asn-128. A run of 2 helical transmembrane segments spans residues 143-163 and 177-197; these read VSPA…ILTM and GDSN…SGMA. Residues 206-208 carry the NPA 2 motif; the sequence is NPM. A helical transmembrane segment spans residues 225–245; that stretch reads YIYWIGPIFGCLLAVFTFDYT.

It belongs to the MIP/aquaporin (TC 1.A.8) family.

It is found in the cell membrane. Probable water-specific aquaporin that may modulate the water content and osmolytes during anhydrobiosis. The polypeptide is Aquaporin-6 (Milnesium tardigradum (Water bear)).